The primary structure comprises 211 residues: GTP pyrophosphokinase YjbM (211 aa).

Guanosine 3'-diphosphate 5'-triphosphate-binding positions include Lys-21 to Arg-28, Glu-41 to Phe-42, and Arg-46 to Lys-48. ATP contacts are provided by residues Arg-46–Lys-48, Ser-52, Lys-56–Arg-59, Asp-72, and Arg-77. Guanosine 3'-diphosphate 5'-triphosphate is bound at residue Arg-59. Asp-72 provides a ligand contact to Mg(2+). Residues Arg-105, Lys-112–Ser-114, and His-120 contribute to the guanosine 3'-diphosphate 5'-triphosphate site. Glu-139 acts as the Proton acceptor in catalysis. Guanosine 3'-diphosphate 5'-triphosphate-binding positions include Asn-148 and Ala-151–His-155.

Belongs to the RelA/SpoT family. In terms of assembly, homotetramer.

The catalysed reaction is GTP + ATP = guanosine 3'-diphosphate 5'-triphosphate + AMP. The enzyme catalyses GDP + ATP = guanosine 3',5'-bis(diphosphate) + AMP. Its pathway is purine metabolism; ppGpp biosynthesis; ppGpp from GTP: step 1/2. With respect to regulation, allosterically regulated by its own products; pppGpp simulates synthesis 10-fold more than ppGpp. 2 pppGpp molecules bind in a regulatory cleft in the middle of the tetramer in an asymmetric manner. There is a specific contact of Lys-25 to the gamma-phosphate of pppGpp, explaining why pppGpp stimulates activity but ppGpp does not. Its function is as follows. Functions as a (p)ppGpp synthase; GDP can be used instead of GTP, resulting in an increase of (p)ppGpp synthesis. The enzyme binds ATP, then GDP or GTP and catalysis is highly cooperative. In eubacteria ppGpp (guanosine 3'-diphosphate 5'-diphosphate) is a mediator of the stringent response that coordinates a variety of cellular activities in response to changes in nutritional abundance. Probably has a minor role in the stringent response. The protein is GTP pyrophosphokinase YjbM (yjbM) of Bacillus subtilis (strain 168).